We begin with the raw amino-acid sequence, 138 residues long: F-box protein At4g12382 (138 aa).

The 47-residue stretch at 7-53 (NPSFADLPSSLIEVIMSHLALKNNIRASAACKSWYEVGVSVRVVEKH) folds into the F-box domain.

The polypeptide is F-box protein At4g12382 (Arabidopsis thaliana (Mouse-ear cress)).